We begin with the raw amino-acid sequence, 122 residues long: Large ribosomal subunit protein uL29A (122 aa).

Residues 10-69 (QLGIKQIEERAAEIKADLAALRQKKNSGDVGANDIKTAKKNLARALTVRREKILEELVEA) are a coiled coil.

The protein belongs to the universal ribosomal protein uL29 family. In terms of assembly, component of the large ribosomal subunit.

Its subcellular location is the cytoplasm. This Encephalitozoon cuniculi (strain GB-M1) (Microsporidian parasite) protein is Large ribosomal subunit protein uL29A (RPL35A).